The chain runs to 853 residues: DNA mismatch repair protein MutS (853 aa).

614–621 provides a ligand contact to ATP; it reads GPNMGGKS.

This sequence belongs to the DNA mismatch repair MutS family.

Functionally, this protein is involved in the repair of mismatches in DNA. It is possible that it carries out the mismatch recognition step. This protein has a weak ATPase activity. This chain is DNA mismatch repair protein MutS, found in Escherichia coli O6:K15:H31 (strain 536 / UPEC).